Reading from the N-terminus, the 98-residue chain is NADH-quinone oxidoreductase subunit K (98 aa).

The next 3 membrane-spanning stretches (helical) occupy residues 1 to 21 (MGHLLGLGAVLFCISLAGIFL), 27 to 47 (IVLLMSIELMLLSVNVNFIAF), and 59 to 79 (FVFFILTVAAAEAAIGLAILV).

The protein belongs to the complex I subunit 4L family. NDH-1 is composed of 14 different subunits. Subunits NuoA, H, J, K, L, M, N constitute the membrane sector of the complex.

The protein resides in the cell inner membrane. It catalyses the reaction a quinone + NADH + 5 H(+)(in) = a quinol + NAD(+) + 4 H(+)(out). NDH-1 shuttles electrons from NADH, via FMN and iron-sulfur (Fe-S) centers, to quinones in the respiratory chain. The immediate electron acceptor for the enzyme in this species is believed to be ubiquinone. Couples the redox reaction to proton translocation (for every two electrons transferred, four hydrogen ions are translocated across the cytoplasmic membrane), and thus conserves the redox energy in a proton gradient. The sequence is that of NADH-quinone oxidoreductase subunit K from Xanthomonas oryzae pv. oryzae (strain PXO99A).